Reading from the N-terminus, the 307-residue chain is Elongation factor Ts (307 aa).

The interval 80–83 (TDFV) is involved in Mg(2+) ion dislocation from EF-Tu.

The protein belongs to the EF-Ts family.

The protein localises to the cytoplasm. In terms of biological role, associates with the EF-Tu.GDP complex and induces the exchange of GDP to GTP. It remains bound to the aminoacyl-tRNA.EF-Tu.GTP complex up to the GTP hydrolysis stage on the ribosome. The polypeptide is Elongation factor Ts (Rhodopseudomonas palustris (strain BisA53)).